The primary structure comprises 476 residues: ATP synthase subunit beta (476 aa).

ATP is bound at residue 154-161 (GGAGVGKT).

This sequence belongs to the ATPase alpha/beta chains family. F-type ATPases have 2 components, CF(1) - the catalytic core - and CF(0) - the membrane proton channel. CF(1) has five subunits: alpha(3), beta(3), gamma(1), delta(1), epsilon(1). CF(0) has four main subunits: a(1), b(1), b'(1) and c(9-12).

The protein localises to the cell inner membrane. It catalyses the reaction ATP + H2O + 4 H(+)(in) = ADP + phosphate + 5 H(+)(out). Its function is as follows. Produces ATP from ADP in the presence of a proton gradient across the membrane. The catalytic sites are hosted primarily by the beta subunits. The chain is ATP synthase subunit beta from Rhodopseudomonas palustris (strain HaA2).